The chain runs to 643 residues: MDSPVLQSAYDPSGQYLCYVTVALDKQRVGVQPTQRATSSGVDTVWNENFLYLEDSKLKVTCLKWVNLASSDTVAIILGMNNGEIWLYSVLANEVTYKFTTGNSYEIKDIDLMGNQLWCIDSSDAFYQFDLLQFKLLQHFRINNCVQLNKLTIVPAGDSVAQLLVASHSISLIDIEEKKVVMTFPGHVSPVSTLQVITNEFFISGAEGDRFLNVYDIHSGMTKCVLVAESDIKELSHSGQADSIAVTTEDGSLEIFVDPLVSSSTKKRGNKSKKSSKKIQIVSKDGRKVPIYNAFINKDLLNVSWLQNATMPYFKNLQWREIPNEYTVEISLNWNNKNKSADRDLHGKDLASATNYVEGNARVTSGDNFKHVDDAIKSWERELTSLEQEQAKPPQANELLTETFGDKLESSTVARISGKKTNLKGSNLKTATTTGTVTVILSQALQSNDHSLLETVLNNRDERVIRDTIFRLKPALAVILLERLAERIARQTHRQGPLNVWVKWCLIIHGGYLVSIPNLMSTLSSLHSTLKRRSDLLPRLLALDARLDCTINKFKTLNYEAGDIHSSEPVVEEDEDDVEYNEELDDAGLIEDGEESYGSEEEEEGDSDNEEEQKHTSSKQDGRLETEQSDGEEEAGYSDVEME.

WD repeat units lie at residues 14-54 (GQYL…LYLE), 55-98 (DSKL…VTYK), 186-225 (GHVS…TKCV), 227-266 (VAES…SSTK), 340-389 (SADR…LEQE), and 471-511 (RLKP…IHGG). A disordered region spans residues 565 to 643 (HSSEPVVEED…EAGYSDVEME (79 aa)). A compositionally biased stretch (acidic residues) spans 570-611 (VVEEDEDDVEYNEELDDAGLIEDGEESYGSEEEEEGDSDNEE). A compositionally biased stretch (basic and acidic residues) spans 612–626 (EQKHTSSKQDGRLET). Acidic residues predominate over residues 627–643 (EQSDGEEEAGYSDVEME).

It belongs to the UTP5 family. In terms of assembly, interacts with snoRNA U3. Interacts with MPP10. Component of the ribosomal small subunit (SSU) processome composed of at least 40 protein subunits and snoRNA U3. In the absence of snoRNA3, forms a complex with other t-UTPs. This complex can associate with pre-18S ribosomal RNAs.

It is found in the nucleus. The protein resides in the nucleolus. Its function is as follows. Involved in nucleolar processing of pre-18S ribosomal RNA. Required for optimal pre-ribosomal RNA transcription by RNA polymerase I together with a subset of U3 proteins required for transcription (t-UTPs). This chain is U3 small nucleolar RNA-associated protein 5 (UTP5), found in Saccharomyces cerevisiae (strain ATCC 204508 / S288c) (Baker's yeast).